Reading from the N-terminus, the 208-residue chain is MTQYIVALTGGIGSGKSTVANTFAALGVPLVDADVIAREVVQPESAALRAIVQRFGPAMLSADGSLDRAALRARIFSDPAEKTWLNGLLHPLIQRQTEQQLRSARAPYVLWVVPMLIENNLQQRANRVLVVDVDRERQIARTISRDGVSREQVENILAAQVSRQRRLACADDIIDNSGRPEEITDRVATLHQRYLALAASATRQDKSS.

Residues 5–201 (IVALTGGIGS…QRYLALAASA (197 aa)) form the DPCK domain. 13–18 (GSGKST) provides a ligand contact to ATP.

This sequence belongs to the CoaE family.

It localises to the cytoplasm. The enzyme catalyses 3'-dephospho-CoA + ATP = ADP + CoA + H(+). It functions in the pathway cofactor biosynthesis; coenzyme A biosynthesis; CoA from (R)-pantothenate: step 5/5. In terms of biological role, catalyzes the phosphorylation of the 3'-hydroxyl group of dephosphocoenzyme A to form coenzyme A. The polypeptide is Dephospho-CoA kinase (Sodalis glossinidius (strain morsitans)).